The sequence spans 551 residues: CTP synthase (551 aa).

The amidoligase domain stretch occupies residues 1–267; it reads MSGTKYIFVT…DALVLEKLGL (267 aa). A CTP-binding site is contributed by Ser15. Ser15 contacts UTP. 16-21 provides a ligand contact to ATP; that stretch reads SIGKGT. Residue Tyr56 coordinates L-glutamine. ATP is bound at residue Asp73. Residues Asp73 and Glu141 each contribute to the Mg(2+) site. CTP is bound by residues 148–150, 188–193, and Lys224; these read DIE and KTKPTQ. Residues 188–193 and Lys224 each bind UTP; that span reads KTKPTQ. The 243-residue stretch at 292 to 534 folds into the Glutamine amidotransferase type-1 domain; that stretch reads RVAVIGKYIR…VGACLGAAEE (243 aa). Gly355 is a binding site for L-glutamine. Cys382 (nucleophile; for glutamine hydrolysis) is an active-site residue. L-glutamine contacts are provided by residues 383-386, Glu406, and Arg462; that span reads LGMQ. Residues His507 and Glu509 contribute to the active site.

It belongs to the CTP synthase family. Homotetramer.

It carries out the reaction UTP + L-glutamine + ATP + H2O = CTP + L-glutamate + ADP + phosphate + 2 H(+). The enzyme catalyses L-glutamine + H2O = L-glutamate + NH4(+). The catalysed reaction is UTP + NH4(+) + ATP = CTP + ADP + phosphate + 2 H(+). It functions in the pathway pyrimidine metabolism; CTP biosynthesis via de novo pathway; CTP from UDP: step 2/2. Allosterically activated by GTP, when glutamine is the substrate; GTP has no effect on the reaction when ammonia is the substrate. The allosteric effector GTP functions by stabilizing the protein conformation that binds the tetrahedral intermediate(s) formed during glutamine hydrolysis. Inhibited by the product CTP, via allosteric rather than competitive inhibition. Functionally, catalyzes the ATP-dependent amination of UTP to CTP with either L-glutamine or ammonia as the source of nitrogen. Regulates intracellular CTP levels through interactions with the four ribonucleotide triphosphates. This chain is CTP synthase, found in Rubrobacter xylanophilus (strain DSM 9941 / JCM 11954 / NBRC 16129 / PRD-1).